Consider the following 611-residue polypeptide: Beta-hexosaminidase (611 aa).

This sequence belongs to the glycosyl hydrolase 20 family. In terms of assembly, homodimer.

It localises to the periplasm. The enzyme catalyses Hydrolysis of terminal non-reducing N-acetyl-D-hexosamine residues in N-acetyl-beta-D-hexosaminides.. It participates in glycan degradation; chitin degradation. Inhibited by mercuric ions, PNP-beta-Glc, PNP-beta-Gal, PNP-alpha-GlcNAc, and PNP-beta-S-GlcNAc. Hydrolyzes aryl-N-acetyl-beta-D-glucosaminide (aryl-beta-GlcNAc), aryl-beta-GalNAc and chitin oligosaccharides. Can hydrolyze rapidly the artificial substrates p-nitrophenyl-N-acetyl-beta-D-glucosaminide (PNP-beta-GlcNAc) and 4-methylumbelliferyl-beta-GlcNAc, and is slightly active on p-nitrophenyl-beta-GalNAc. This enzyme is not processive, i.e. when it hydrolyzes (GlcNAc)n, both products, (Glc-NAc)n-1 and the terminal GlcNAc, are released before the enzyme attacks a second molecule of (GlcNAc)n or (GlcNAc)n-1. The sequence is that of Beta-hexosaminidase from Vibrio furnissii.